Here is a 136-residue protein sequence, read N- to C-terminus: Small ribosomal subunit protein uS8 (136 aa).

Belongs to the universal ribosomal protein uS8 family. In terms of assembly, part of the 30S ribosomal subunit. Contacts proteins S5 and S12.

In terms of biological role, one of the primary rRNA binding proteins, it binds directly to 16S rRNA central domain where it helps coordinate assembly of the platform of the 30S subunit. The polypeptide is Small ribosomal subunit protein uS8 (Synechococcus sp. (strain JA-2-3B'a(2-13)) (Cyanobacteria bacterium Yellowstone B-Prime)).